The primary structure comprises 360 residues: DNA replication and repair protein RecF (360 aa).

30–37 (GHNGSGKT) is an ATP binding site.

The protein belongs to the RecF family.

The protein localises to the cytoplasm. In terms of biological role, the RecF protein is involved in DNA metabolism; it is required for DNA replication and normal SOS inducibility. RecF binds preferentially to single-stranded, linear DNA. It also seems to bind ATP. This chain is DNA replication and repair protein RecF, found in Haemophilus ducreyi (strain 35000HP / ATCC 700724).